We begin with the raw amino-acid sequence, 639 residues long: Chaperone protein DnaK (639 aa).

Residue Thr-198 is modified to Phosphothreonine; by autocatalysis. The tract at residues 597–639 (AYSAGQSAEGAPHAAGAEASAQSRTDDGVVDADFEEVDEKKGH) is disordered. The segment covering 603–617 (SAEGAPHAAGAEASA) has biased composition (low complexity). The span at 624-633 (GVVDADFEEV) shows a compositional bias: acidic residues.

Belongs to the heat shock protein 70 family.

In terms of biological role, acts as a chaperone. The protein is Chaperone protein DnaK of Rhodospirillum rubrum (strain ATCC 11170 / ATH 1.1.1 / DSM 467 / LMG 4362 / NCIMB 8255 / S1).